The primary structure comprises 160 residues: UPF0262 protein Oant_0325 (160 aa).

This sequence belongs to the UPF0262 family.

In Brucella anthropi (strain ATCC 49188 / DSM 6882 / CCUG 24695 / JCM 21032 / LMG 3331 / NBRC 15819 / NCTC 12168 / Alc 37) (Ochrobactrum anthropi), this protein is UPF0262 protein Oant_0325.